Consider the following 152-residue polypeptide: Putative multi-protein-binding factor 1 (152 aa).

A disordered region spans residues 1-24; sequence MSDDWESKTVIGSRARVGGGGPRA. The HTH cro/C1-type domain occupies 86 to 140; that stretch reads IIKGRSEKGLTQKELAVKINEKPQVVNDYESGRAQPNQQVLSKMERVLGIKLRGK. Positions 97–116 form a DNA-binding region, H-T-H motif; sequence QKELAVKINEKPQVVNDYES.

This sequence belongs to the MBF1 family.

Its function is as follows. Transcriptional coactivator that stimulates GCN4-dependent transcriptional activity by bridging the DNA-binding region of GCN4 and TBP (SPT15), thereby recruiting TBP to GCN4-bound promoters. Involved in induction of the ribosome quality control (RQC) pathway; a pathway that degrades nascent peptide chains during problematic translation. Required to prevent stalled ribosomes from frameshifting. The protein is Putative multi-protein-binding factor 1 (MBF1) of Yarrowia lipolytica (strain CLIB 122 / E 150) (Yeast).